The primary structure comprises 218 residues: Small ribosomal subunit protein uS3c (218 aa).

Residues 47 to 118 (VQKNMRTSSG…KLNIAVTRIA (72 aa)) form the KH type-2 domain.

The protein belongs to the universal ribosomal protein uS3 family. As to quaternary structure, part of the 30S ribosomal subunit.

It localises to the plastid. Its subcellular location is the chloroplast. The polypeptide is Small ribosomal subunit protein uS3c (rps3) (Solanum bulbocastanum (Wild potato)).